A 244-amino-acid polypeptide reads, in one-letter code: Type III pantothenate kinase (244 aa).

8 to 15 (DQGNSACK) provides a ligand contact to ATP. Position 94 to 97 (94 to 97 (GADR)) interacts with substrate. Aspartate 96 functions as the Proton acceptor in the catalytic mechanism. Aspartate 117 contributes to the K(+) binding site. Threonine 120 provides a ligand contact to ATP. Threonine 175 is a binding site for substrate.

Belongs to the type III pantothenate kinase family. In terms of assembly, homodimer. NH4(+) serves as cofactor. K(+) is required as a cofactor.

It localises to the cytoplasm. The catalysed reaction is (R)-pantothenate + ATP = (R)-4'-phosphopantothenate + ADP + H(+). Its pathway is cofactor biosynthesis; coenzyme A biosynthesis; CoA from (R)-pantothenate: step 1/5. Catalyzes the phosphorylation of pantothenate (Pan), the first step in CoA biosynthesis. The protein is Type III pantothenate kinase of Porphyromonas gingivalis (strain ATCC 33277 / DSM 20709 / CIP 103683 / JCM 12257 / NCTC 11834 / 2561).